A 636-amino-acid polypeptide reads, in one-letter code: p-hydroxybenzoate-m-hydroxylase (636 aa).

Residues 11–40, 242–244, Tyr290, and Asp311 contribute to the FAD site; these read DIVI…HIDN and RLY. A helical membrane pass occupies residues 12-33; the sequence is IVIVGAGPVGILLSLCMSRWGY. The N-linked (GlcNAc...) asparagine glycan is linked to Asn573.

The protein belongs to the PheA/TfdB FAD monooxygenase family. The cofactor is FAD.

It localises to the membrane. The enzyme catalyses 4-hydroxybenzoate + NADH + O2 + H(+) = 3,4-dihydroxybenzoate + NAD(+) + H2O. The catalysed reaction is 4-hydroxybenzoate + NADPH + O2 + H(+) = 3,4-dihydroxybenzoate + NADP(+) + H2O. Functionally, FAD-dependent monooxygenase; part of the benzoic acid degradation pathway also known as the protocatechuic acid pathway. Benzoic acid debradation begins with the conversion of benzoic acid into 4-hydroxybenzoic acid through hydroxylation by the benzoate-4-monooxygenase bphA, and its partner NADPH-cytochrome P450 reductase cprA which act as a mediator in electron donation from NADPH. 4-Hydroxybenzoic acid is then converted into 3,4-dihydroxybenzoic acid (also called protocatechuic acid) by the p-hydroxybenzoate-m-hydroxylase phhA. Protocatechuic acid is converted into 3-carboxy-cis,cis-muconic acid by the intradiol ring-cleavage dioxygenase prcA, which is further metabolized through the 3-oxoadipate pathway to finally enter the tricarboxylic acid cycle (TCA). The chain is p-hydroxybenzoate-m-hydroxylase from Emericella nidulans (strain FGSC A4 / ATCC 38163 / CBS 112.46 / NRRL 194 / M139) (Aspergillus nidulans).